Here is a 344-residue protein sequence, read N- to C-terminus: Methionine import ATP-binding protein MetN (344 aa).

The ABC transporter domain maps to 2–241; that stretch reads IELQGLSQRF…PQHEVTRAMI (240 aa). Residue 38 to 45 participates in ATP binding; the sequence is GRSGAGKS.

Belongs to the ABC transporter superfamily. Methionine importer (TC 3.A.1.24) family. As to quaternary structure, the complex is composed of two ATP-binding proteins (MetN), two transmembrane proteins (MetI) and a solute-binding protein (MetQ).

The protein resides in the cell inner membrane. The enzyme catalyses L-methionine(out) + ATP + H2O = L-methionine(in) + ADP + phosphate + H(+). The catalysed reaction is D-methionine(out) + ATP + H2O = D-methionine(in) + ADP + phosphate + H(+). In terms of biological role, part of the ABC transporter complex MetNIQ involved in methionine import. Responsible for energy coupling to the transport system. The chain is Methionine import ATP-binding protein MetN from Cupriavidus pinatubonensis (strain JMP 134 / LMG 1197) (Cupriavidus necator (strain JMP 134)).